A 185-amino-acid polypeptide reads, in one-letter code: Elongation factor P (185 aa).

Belongs to the elongation factor P family.

It is found in the cytoplasm. The protein operates within protein biosynthesis; polypeptide chain elongation. Involved in peptide bond synthesis. Stimulates efficient translation and peptide-bond synthesis on native or reconstituted 70S ribosomes in vitro. Probably functions indirectly by altering the affinity of the ribosome for aminoacyl-tRNA, thus increasing their reactivity as acceptors for peptidyl transferase. The polypeptide is Elongation factor P (Bacillus pumilus (strain SAFR-032)).